A 627-amino-acid chain; its full sequence is Xaa-Pro aminopeptidase 1 (627 aa).

A peptide contacts are provided by arginine 88 and histidine 405. Mn(2+) contacts are provided by aspartate 424, aspartate 435, and histidine 498. Residues histidine 498, histidine 507, and glutamate 533 each coordinate a peptide. The Mn(2+) site is built by glutamate 533 and glutamate 547.

This sequence belongs to the peptidase M24B family. In terms of assembly, homodimer. It depends on Mn(2+) as a cofactor.

Its subcellular location is the cytoplasm. It is found in the cytosol. It catalyses the reaction Release of any N-terminal amino acid, including proline, that is linked to proline, even from a dipeptide or tripeptide.. Its function is as follows. Metalloaminopeptidase that catalyzes the removal of a penultimate prolyl residue from the N-termini of peptides, such as Arg-Pro-Pro. The protein is Xaa-Pro aminopeptidase 1 (xpnpep1) of Dictyostelium discoideum (Social amoeba).